Reading from the N-terminus, the 38-residue chain is Photosystem I reaction center subunit IX (38 aa).

A helical transmembrane segment spans residues 4–24; that stretch reads FLTAAPVVAAIWFTATAGILI.

Belongs to the PsaJ family.

Its subcellular location is the cellular thylakoid membrane. Functionally, may help in the organization of the PsaE and PsaF subunits. This chain is Photosystem I reaction center subunit IX, found in Synechococcus sp. (strain CC9605).